The chain runs to 120 residues: Anti-adapter protein IraM (120 aa).

Belongs to the IraM/RssC family.

It localises to the cytoplasm. Functionally, involved in the stabilization of the sigma stress factor RpoS. This is Anti-adapter protein IraM from Salmonella choleraesuis (strain SC-B67).